A 188-amino-acid chain; its full sequence is Pyridoxal 5'-phosphate synthase subunit PdxT (188 aa).

Gly-46–Ser-48 contacts L-glutamine. Cys-78 serves as the catalytic Nucleophile. Residues Arg-105 and Ile-134–Arg-135 contribute to the L-glutamine site. Residues His-170 and Glu-172 each act as charge relay system in the active site.

Belongs to the glutaminase PdxT/SNO family. In the presence of PdxS, forms a dodecamer of heterodimers. Only shows activity in the heterodimer.

It catalyses the reaction aldehydo-D-ribose 5-phosphate + D-glyceraldehyde 3-phosphate + L-glutamine = pyridoxal 5'-phosphate + L-glutamate + phosphate + 3 H2O + H(+). The enzyme catalyses L-glutamine + H2O = L-glutamate + NH4(+). It participates in cofactor biosynthesis; pyridoxal 5'-phosphate biosynthesis. Catalyzes the hydrolysis of glutamine to glutamate and ammonia as part of the biosynthesis of pyridoxal 5'-phosphate. The resulting ammonia molecule is channeled to the active site of PdxS. This is Pyridoxal 5'-phosphate synthase subunit PdxT from Thermotoga neapolitana (strain ATCC 49049 / DSM 4359 / NBRC 107923 / NS-E).